Here is a 589-residue protein sequence, read N- to C-terminus: Aspartate--tRNA ligase (589 aa).

E174 lines the L-aspartate pocket. Residues Q198 to K201 form an aspartate region. Residue R220 participates in L-aspartate binding. ATP is bound by residues R220–E222 and Q229. An L-aspartate-binding site is contributed by H448. E483 provides a ligand contact to ATP. R490 contributes to the L-aspartate binding site. G535–R538 contributes to the ATP binding site.

Belongs to the class-II aminoacyl-tRNA synthetase family. Type 1 subfamily. As to quaternary structure, homodimer.

The protein resides in the cytoplasm. It carries out the reaction tRNA(Asp) + L-aspartate + ATP = L-aspartyl-tRNA(Asp) + AMP + diphosphate. Functionally, catalyzes the attachment of L-aspartate to tRNA(Asp) in a two-step reaction: L-aspartate is first activated by ATP to form Asp-AMP and then transferred to the acceptor end of tRNA(Asp). This chain is Aspartate--tRNA ligase, found in Xylella fastidiosa (strain 9a5c).